We begin with the raw amino-acid sequence, 389 residues long: Alpha carbonic anhydrase 8 (389 aa).

A signal peptide spans 1–22 (MKISSLGWVLVLIFISITIVSS). Residues 21 to 153 (SSAPAPKPPK…TKGNKGPAKW (133 aa)) form a disordered region. The span at 25 to 129 (APKPPKPKPA…PKPKPAPKPA (105 aa)) shows a compositional bias: pro residues. Residues 138 to 374 (TEFSYETKGN…VNKRKVYLYK (237 aa)) enclose the Alpha-carbonic anhydrase domain. Cysteine 163 and cysteine 324 are disulfide-bonded. Residue asparagine 196 is glycosylated (N-linked (GlcNAc...) asparagine). Histidine 204 serves as the catalytic Proton acceptor. Zn(2+)-binding residues include histidine 232, histidine 234, and histidine 251. 320–321 (TA) lines the substrate pocket. N-linked (GlcNAc...) asparagine glycosylation is present at asparagine 385.

Belongs to the alpha-class carbonic anhydrase family. Zn(2+) serves as cofactor. Post-translationally, N-glycosylated.

The protein localises to the plastid. The protein resides in the chloroplast stroma. The enzyme catalyses hydrogencarbonate + H(+) = CO2 + H2O. Its function is as follows. Reversible hydration of carbon dioxide. This Arabidopsis thaliana (Mouse-ear cress) protein is Alpha carbonic anhydrase 8 (ACA8).